The chain runs to 136 residues: Large-conductance mechanosensitive channel (136 aa).

Topologically, residues 1 to 16 are cytoplasmic; it reads MGLLSEFKAFAVKGNV. A helical membrane pass occupies residues 17 to 45; that stretch reads VDMAVGIIIGAAFGKIVSSFVGDVIMPPI. Over 46–73 the chain is Extracellular; it reads GLLIGGVDFSDLAITLKAEGDVPAVVLA. The helical transmembrane segment at 74-93 threads the bilayer; it reads YRKFIQTVLNFVIVAFAIFM. The Cytoplasmic segment spans residues 94-136; it reads GVKAINRLKREEAVAPSEPPVPSAEETLLTEIRDLLKAQQNKS.

This sequence belongs to the MscL family. As to quaternary structure, homopentamer.

Its subcellular location is the cell inner membrane. Functionally, channel that opens in response to stretch forces in the membrane lipid bilayer. Forms a nonselective ion channel with a conductance of about 4 nanosiemens. May participate in the regulation of osmotic pressure changes within the cell. The sequence is that of Large-conductance mechanosensitive channel from Pseudomonas fluorescens.